A 141-amino-acid chain; its full sequence is Cholinesterase (141 aa).

A glycan (N-linked (GlcNAc...) asparagine) is linked at asparagine 39. 49 to 50 (GG) lines the substrate pocket. Residue serine 131 is the Acyl-ester intermediate of the active site. Serine 131 carries the post-translational modification Phosphoserine.

It belongs to the type-B carboxylesterase/lipase family. As to quaternary structure, homotetramer; disulfide-linked. Dimer of dimers. As to expression, present in most cells except erythrocytes.

Its subcellular location is the secreted. It carries out the reaction an acylcholine + H2O = a carboxylate + choline + H(+). Functionally, esterase with broad substrate specificity. Contributes to the inactivation of the neurotransmitter acetylcholine. Can degrade neurotoxic organophosphate esters. The polypeptide is Cholinesterase (BCHE) (Canis lupus familiaris (Dog)).